The chain runs to 134 residues: Flagellar basal-body rod protein FlgC (134 aa).

It belongs to the flagella basal body rod proteins family. The basal body constitutes a major portion of the flagellar organelle and consists of four rings (L,P,S, and M) mounted on a central rod. The rod consists of about 26 subunits of FlgG in the distal portion, and FlgB, FlgC and FlgF are thought to build up the proximal portion of the rod with about 6 subunits each.

It localises to the bacterial flagellum basal body. The sequence is that of Flagellar basal-body rod protein FlgC (flgC) from Salmonella typhi.